Reading from the N-terminus, the 126-residue chain is Fluoride-specific ion channel FluC (126 aa).

The next 4 helical transmembrane spans lie at 5–25, 34–54, 71–91, and 100–120; these read ILCV…FYFG, YIFI…GFVL, VTGL…NAVF, and FFLN…LGIY. Residues G76 and T79 each coordinate Na(+).

It belongs to the fluoride channel Fluc/FEX (TC 1.A.43) family.

It is found in the cell inner membrane. The enzyme catalyses fluoride(in) = fluoride(out). Na(+) is not transported, but it plays an essential structural role and its presence is essential for fluoride channel function. In terms of biological role, fluoride-specific ion channel. Important for reducing fluoride concentration in the cell, thus reducing its toxicity. The polypeptide is Fluoride-specific ion channel FluC (Campylobacter hominis (strain ATCC BAA-381 / DSM 21671 / CCUG 45161 / LMG 19568 / NCTC 13146 / CH001A)).